We begin with the raw amino-acid sequence, 362 residues long: 3-dehydroquinate synthase (362 aa).

It belongs to the archaeal-type DHQ synthase family.

It catalyses the reaction 2-amino-2,3,7-trideoxy-D-lyxo-hept-6-ulosonate + NAD(+) + H2O = 3-dehydroquinate + NH4(+) + NADH + H(+). In terms of biological role, catalyzes the oxidative deamination and cyclization of 2-amino-3,7-dideoxy-D-threo-hept-6-ulosonic acid (ADH) to yield 3-dehydroquinate (DHQ), which is fed into the canonical shikimic pathway of aromatic amino acid biosynthesis. The polypeptide is 3-dehydroquinate synthase (Methanococcus aeolicus (strain ATCC BAA-1280 / DSM 17508 / OCM 812 / Nankai-3)).